The sequence spans 250 residues: Protein KPLCE (250 aa).

As to expression, skin-specific.

The chain is Protein KPLCE from Homo sapiens (Human).